A 414-amino-acid chain; its full sequence is Coenzyme A biosynthesis bifunctional protein CoaBC (414 aa).

The segment at 1-191 is phosphopantothenoylcysteine decarboxylase; the sequence is MSARKRIVVG…ALPYDMAGVK (191 aa). The interval 192 to 414 is phosphopantothenate--cysteine ligase; the sequence is ALVTAGGTRE…IAAFLKSQDG (223 aa). CTP-binding positions include 275 to 277, aspartate 281, lysine 291, 293 to 294, 308 to 311, phenylalanine 332, lysine 350, and lysine 354; these read MAA, KK, and DDVL.

This sequence in the N-terminal section; belongs to the HFCD (homo-oligomeric flavin containing Cys decarboxylase) superfamily. The protein in the C-terminal section; belongs to the PPC synthetase family. As to quaternary structure, homododecamer. Mg(2+) serves as cofactor. Requires FMN as cofactor.

The catalysed reaction is N-[(R)-4-phosphopantothenoyl]-L-cysteine + H(+) = (R)-4'-phosphopantetheine + CO2. It carries out the reaction (R)-4'-phosphopantothenate + L-cysteine + CTP = N-[(R)-4-phosphopantothenoyl]-L-cysteine + CMP + diphosphate + H(+). The protein operates within cofactor biosynthesis; coenzyme A biosynthesis; CoA from (R)-pantothenate: step 2/5. It functions in the pathway cofactor biosynthesis; coenzyme A biosynthesis; CoA from (R)-pantothenate: step 3/5. Its activity is regulated as follows. Two related chemical scaffolds that potently inhibit the activity of the CoaB moiety of CoaBC through a cryptic allosteric site that sits in the dimer interface region of the CoaB enzyme were identified. In terms of biological role, catalyzes two sequential steps in the biosynthesis of coenzyme A. In the first step cysteine is conjugated to 4'-phosphopantothenate to form 4-phosphopantothenoylcysteine. In the second step the latter compound is decarboxylated to form 4'-phosphopantotheine. This chain is Coenzyme A biosynthesis bifunctional protein CoaBC, found in Mycolicibacterium smegmatis (strain ATCC 700084 / mc(2)155) (Mycobacterium smegmatis).